A 428-amino-acid polypeptide reads, in one-letter code: Chaperone SurA (428 aa).

The signal sequence occupies residues 1 to 13; that stretch reads MLGALLLSGAVHA. PpiC domains follow at residues 164–265 and 276–375; these read SEEF…KLLE and RDEV…EVLG.

Its subcellular location is the periplasm. The enzyme catalyses [protein]-peptidylproline (omega=180) = [protein]-peptidylproline (omega=0). Functionally, chaperone involved in the correct folding and assembly of outer membrane proteins. Recognizes specific patterns of aromatic residues and the orientation of their side chains, which are found more frequently in integral outer membrane proteins. May act in both early periplasmic and late outer membrane-associated steps of protein maturation. The chain is Chaperone SurA from Pseudomonas savastanoi pv. phaseolicola (strain 1448A / Race 6) (Pseudomonas syringae pv. phaseolicola (strain 1448A / Race 6)).